The following is a 372-amino-acid chain: M protein, serotype 2.2 (372 aa).

The first 41 residues, 1-41, serve as a signal peptide directing secretion; the sequence is MARQQTKKNYSLRKLKTGTASVAVALTVLGAGFANQTEVRA. 3 C repeats span residues 124–158, 166–200, and 215–249; these read AKTT…EAKH, KKLT…EAKY, and QKLE…TSEL. Basic and acidic residues-rich tracts occupy residues 125–169, 226–246, and 260–274; these read KTTK…KKLT, TSRK…KKVT, and EESK…AELQ. Disordered stretches follow at residues 125–191 and 211–274; these read KTTK…ASRA and EAKH…AELQ. D repeat units lie at residues 275 to 280, 281 to 286, 289 to 294, and 296 to 301; these read AKLDAQ, GKALKE, AKQTEE, and AKLRAE. Residues 295–304 show a composition bias toward basic and acidic residues; sequence LAKLRAEKAA. Positions 295–344 are disordered; that stretch reads LAKLRAEKAAGSKTPATKPANKERSGRAAQTATRPSQNKGMRSQLPSTGE. Over residues 322–341 the composition is skewed to polar residues; the sequence is AAQTATRPSQNKGMRSQLPS. Positions 339–343 match the LPXTG sorting signal motif; that stretch reads LPSTG. Threonine 342 is modified (pentaglycyl murein peptidoglycan amidated threonine). Positions 343–372 are cleaved as a propeptide — removed by sortase; sequence GEAANPFFTAAAATVMVSAGMLALKRKEEN.

This sequence belongs to the M protein family.

It is found in the secreted. Its subcellular location is the cell wall. In terms of biological role, this protein is one of the different antigenic serotypes of protein M. Protein M is closely associated with virulence of the bacterium and can render the organism resistant to phagocytosis. This Streptococcus pyogenes protein is M protein, serotype 2.2 (emmL2.2).